The following is a 515-amino-acid chain: GMP synthase [glutamine-hydrolyzing] (515 aa).

The 193-residue stretch at 6 to 198 (KVIILDFGSQ…VFKVAGLKAD (193 aa)) folds into the Glutamine amidotransferase type-1 domain. Residue Cys-83 is the Nucleophile of the active site. Residues His-172 and Glu-174 contribute to the active site. Residues 199 to 390 (WTMSSFVENC…LGLPEFIIWR (192 aa)) form the GMPS ATP-PPase domain. Residue 226 to 232 (SGGIDST) coordinates ATP.

Homodimer.

It carries out the reaction XMP + L-glutamine + ATP + H2O = GMP + L-glutamate + AMP + diphosphate + 2 H(+). It functions in the pathway purine metabolism; GMP biosynthesis; GMP from XMP (L-Gln route): step 1/1. Its function is as follows. Catalyzes the synthesis of GMP from XMP. The chain is GMP synthase [glutamine-hydrolyzing] from Maridesulfovibrio salexigens (strain ATCC 14822 / DSM 2638 / NCIMB 8403 / VKM B-1763) (Desulfovibrio salexigens).